Reading from the N-terminus, the 381-residue chain is Queuine tRNA-ribosyltransferase (381 aa).

Residue Asp-96 is the Proton acceptor of the active site. Substrate contacts are provided by residues 96-100, Asp-150, Gln-193, and Gly-220; that span reads DSGGF. An RNA binding region spans residues 251–257; the sequence is GVGSPDA. Asp-270 acts as the Nucleophile in catalysis. Positions 275 to 279 are RNA binding; important for wobble base 34 recognition; sequence TRIAR. Zn(2+) contacts are provided by Cys-308, Cys-310, Cys-313, and His-339.

The protein belongs to the queuine tRNA-ribosyltransferase family. As to quaternary structure, homodimer. Within each dimer, one monomer is responsible for RNA recognition and catalysis, while the other monomer binds to the replacement base PreQ1. Requires Zn(2+) as cofactor.

It carries out the reaction 7-aminomethyl-7-carbaguanine + guanosine(34) in tRNA = 7-aminomethyl-7-carbaguanosine(34) in tRNA + guanine. It participates in tRNA modification; tRNA-queuosine biosynthesis. Its function is as follows. Catalyzes the base-exchange of a guanine (G) residue with the queuine precursor 7-aminomethyl-7-deazaguanine (PreQ1) at position 34 (anticodon wobble position) in tRNAs with GU(N) anticodons (tRNA-Asp, -Asn, -His and -Tyr). Catalysis occurs through a double-displacement mechanism. The nucleophile active site attacks the C1' of nucleotide 34 to detach the guanine base from the RNA, forming a covalent enzyme-RNA intermediate. The proton acceptor active site deprotonates the incoming PreQ1, allowing a nucleophilic attack on the C1' of the ribose to form the product. After dissociation, two additional enzymatic reactions on the tRNA convert PreQ1 to queuine (Q), resulting in the hypermodified nucleoside queuosine (7-(((4,5-cis-dihydroxy-2-cyclopenten-1-yl)amino)methyl)-7-deazaguanosine). This Bacillus velezensis (strain DSM 23117 / BGSC 10A6 / LMG 26770 / FZB42) (Bacillus amyloliquefaciens subsp. plantarum) protein is Queuine tRNA-ribosyltransferase.